The chain runs to 579 residues: MFS-type transporter ppz2 (579 aa).

Residues methionine 1–glutamine 23 are disordered. A compositionally biased stretch (low complexity) spans serine 10 to serine 20. Residue asparagine 38 is glycosylated (N-linked (GlcNAc...) asparagine). The next 14 membrane-spanning stretches (helical) occupy residues alanine 48–isoleucine 68, alanine 83–tryptophan 103, leucine 121–alanine 141, isoleucine 145–phenylalanine 165, glycine 171–valine 191, tryptophan 203–leucine 223, isoleucine 236–leucine 256, serine 269–tryptophan 289, leucine 298–isoleucine 318, alanine 336–isoleucine 356, leucine 374–leucine 394, isoleucine 403–valine 423, threonine 438–phenylalanine 460, and serine 516–glycine 536.

It belongs to the major facilitator superfamily. TCR/Tet family.

It is found in the membrane. MFS-type transporter; part of the gene cluster that mediates the biosynthesis of pyrrolopyrazines, secondary metabolites showing insecticidal activity. Probably involved in the secretion of peramine and other pyrrolopyrazines. In Metarhizium majus (strain ARSEF 297), this protein is MFS-type transporter ppz2.